Here is a 521-residue protein sequence, read N- to C-terminus: Zinc finger protein GLIS2 (521 aa).

The tract at residues 35–174 (ALHRELGLVD…AKQLVCRWAK (140 aa)) is interaction with CTNND1. Disordered regions lie at residues 41-63 (GLVD…LLNP) and 84-110 (SPPS…DLPP). Residues 49–58 (PGSPGSPPPG) are compositionally biased toward pro residues. The tract at residues 71–137 (GRFSAAPLVD…SSFQFFLPLG (67 aa)) is transcription activation. Residues 84 to 100 (SPPSGLDSPNGSSSLSP) show a composition bias toward low complexity. The tract at residues 148–171 (SFLPPPKDKCLSPELPLAKQLVCR) is transcription repression. The C2H2-type 1 zinc-finger motif lies at 168 to 193 (LVCRWAKCNQLFELLQDLVDHVNDHH). The segment at 202-229 (YCCHWEGCARHGRGFNARYKMLIHIRTH) adopts a C2H2-type 2; atypical zinc-finger fold. C2H2-type zinc fingers lie at residues 235–257 (HRCP…NRSH), 263–287 (YVCP…TRTH), and 293–317 (YYCK…IKAH). The tract at residues 436–501 (AGSKAEGEKG…NSAASSPEVL (66 aa)) is disordered. The span at 455 to 470 (GLEDHKTPLERTERSR) shows a compositional bias: basic and acidic residues. A compositionally biased stretch (polar residues) spans 487–496 (DLSTGNSAAS).

It belongs to the GLI C2H2-type zinc-finger protein family. Interacts with CTBP1 and HDAC3. Interacts with CTNNB1 and CTNND1. Interacts with SUFU. In terms of processing, C-terminus cleavage is induced by interaction with CTNND1 and enhances by Src tyrosine kinase. Expressed at high levels in kidney, and at lower levels in heart and lung.

The protein resides in the nucleus speckle. The protein localises to the cytoplasm. Its function is as follows. Can act either as a transcriptional repressor or as a transcriptional activator, depending on the cell context. Acts as a repressor of the Hedgehog signaling pathway. Represses the Hedgehog-dependent expression of Wnt4. Necessary to maintain the differentiated epithelial phenotype in renal cells through the inhibition of SNAI1, which itself induces the epithelial-to-mesenchymal transition. Represses transcriptional activation by CTNNB1 in the Wnt signaling pathway. May act by recruiting the corepressors CTBP1 and HDAC3. May be involved in neuron differentiation. The polypeptide is Zinc finger protein GLIS2 (Glis2) (Mus musculus (Mouse)).